The following is a 395-amino-acid chain: MKFKRVFGLVMDSVGAGAAPDANKFGDEGADTLGHVGHHFAGKLALPNLAKIGLSNLRETPIEGVPVADDPHAYYGKMREISAGKDSMDGHWEMMGLPVRKALSTFPNGFPADIITKLETFSGRKVIGNRPESGTKIIAELGEQQMKTGDLIVYTSGDSVLQIAAHEDVIPLAELYKICEYARSLVNGPEYLVGRIIARPYVGPDADHFTRTANRRDFTLEPTGETDLDRLQAAGVRVVAVGKTNDIFSGHGIDEAYHNESNMDGMDHVDHVMTEDFTGFCFINLVDFDAMYGHRRNPDGFGQALMDFDQRLGTVLANMHDDDLLMITADHGNDPTYTGTDHTREQVPLLVYSPSFKQGGSLGVRSPFADFGATVLDNFGVAGNHEGHSFLAELK.

Mn(2+)-binding residues include aspartate 12, aspartate 289, histidine 294, aspartate 330, histidine 331, and histidine 342.

This sequence belongs to the phosphopentomutase family. Mn(2+) serves as cofactor.

Its subcellular location is the cytoplasm. It catalyses the reaction 2-deoxy-alpha-D-ribose 1-phosphate = 2-deoxy-D-ribose 5-phosphate. The enzyme catalyses alpha-D-ribose 1-phosphate = D-ribose 5-phosphate. The protein operates within carbohydrate degradation; 2-deoxy-D-ribose 1-phosphate degradation; D-glyceraldehyde 3-phosphate and acetaldehyde from 2-deoxy-alpha-D-ribose 1-phosphate: step 1/2. In terms of biological role, isomerase that catalyzes the conversion of deoxy-ribose 1-phosphate (dRib-1-P) and ribose 1-phosphate (Rib-1-P) to deoxy-ribose 5-phosphate (dRib-5-P) and ribose 5-phosphate (Rib-5-P), respectively. The chain is Phosphopentomutase from Levilactobacillus brevis (strain ATCC 367 / BCRC 12310 / CIP 105137 / JCM 1170 / LMG 11437 / NCIMB 947 / NCTC 947) (Lactobacillus brevis).